A 619-amino-acid chain; its full sequence is TOX high mobility group box family member 4 (619 aa).

Disordered regions lie at residues 153-227 and 304-337; these read LGLS…QKPV and DMDP…PPAL. T176 bears the Phosphothreonine mark. 3 positions are modified to phosphoserine: S178, S181, and S182. Positions 183–193 are enriched in basic and acidic residues; sequence LHEDGVEEFRR. Positions 208–218 are enriched in basic residues; that stretch reads KQKAPKKRKKK. The Nuclear localization signal motif lies at 213–218; sequence KKRKKK. The segment at residues 223–291 is a DNA-binding region (HMG box); that stretch reads PQKPVSAYAL…EYLKALAAYK (69 aa). Over residues 307–319 the composition is skewed to pro residues; it reads PAPPSQTPSPPPV. Phosphothreonine is present on T313. Phosphoserine is present on S315. A compositionally biased stretch (low complexity) spans 320–337; it reads AAADPASPAPASTEPPAL. R479 carries the post-translational modification Asymmetric dimethylarginine. Residues 507–529 are disordered; the sequence is PPPVESSPEQPVNNSPETHTVEE. Residues 512–524 show a composition bias toward low complexity; it reads SSPEQPVNNSPET. Phosphoserine is present on residues S548, S550, S558, S560, and S565.

In terms of assembly, component of the PNUTS-PP1 phosphatase complex, composed of PPP1R10/PNUTS, TOX4, WDR82 and PPP1CA or PPP1CB or PPP1CC. Interacts with PPP1R10/PNUTS. Interacts with FOXO1 and CREB1 (increased by cAMP); FOXO1 and CREB1 are required for full induction of TOX4-dependent activity and the interactions are inhibited by insulin.

The protein localises to the nucleus. It is found in the chromosome. With respect to regulation, in liver, recruited to target gene promoters following treatment with dexamethasone and cAMP. Binding is decreased in presence of insulin. Transcription factor that modulates cell fate reprogramming from the somatic state to the pluripotent and neuronal fate. In liver, controls the expression of hormone-regulated gluconeogenic genes such as G6PC1 and PCK1. This regulation is independent of the insulin receptor activation. Also acts as a regulatory component of protein phosphatase 1 (PP1) complexes. Component of the PNUTS-PP1 protein phosphatase complex, a PP1 complex that regulates RNA polymerase II transcription pause-release. PNUTS-PP1 also plays a role in the control of chromatin structure and cell cycle progression during the transition from mitosis into interphase. The chain is TOX high mobility group box family member 4 (TOX4) from Bos taurus (Bovine).